The sequence spans 146 residues: Hemoglobin subunit beta (146 aa).

Positions 2 to 146 (HWTADEKQLI…VAHALALGYH (145 aa)) constitute a Globin domain. Heme b contacts are provided by His63 and His92.

The protein belongs to the globin family. As to quaternary structure, heterotetramer of two alpha chains and two beta chains. Red blood cells.

Functionally, involved in oxygen transport from the lung to the various peripheral tissues. The chain is Hemoglobin subunit beta (HBB) from Chrysemys picta bellii (Western painted turtle).